The sequence spans 740 residues: Elongation factor 2 (740 aa).

Residues A23–N264 enclose the tr-type G domain. GTP contacts are provided by residues A32 to T39, D98 to H102, and N152 to D155. H605 carries the post-translational modification Diphthamide.

Belongs to the TRAFAC class translation factor GTPase superfamily. Classic translation factor GTPase family. EF-G/EF-2 subfamily.

Its subcellular location is the cytoplasm. Catalyzes the GTP-dependent ribosomal translocation step during translation elongation. During this step, the ribosome changes from the pre-translocational (PRE) to the post-translocational (POST) state as the newly formed A-site-bound peptidyl-tRNA and P-site-bound deacylated tRNA move to the P and E sites, respectively. Catalyzes the coordinated movement of the two tRNA molecules, the mRNA and conformational changes in the ribosome. This chain is Elongation factor 2, found in Pyrobaculum islandicum (strain DSM 4184 / JCM 9189 / GEO3).